The following is a 547-amino-acid chain: CTP synthase (547 aa).

Residues 1–265 (MARYIFITGG…DQAVLDAFQI (265 aa)) are amidoligase domain. Position 13 (serine 13) interacts with CTP. Serine 13 contacts UTP. ATP contacts are provided by residues 14–19 (SLGKGL) and aspartate 71. Residues aspartate 71 and glutamate 139 each coordinate Mg(2+). CTP is bound by residues 146 to 148 (DIE), 186 to 191 (KTKPTQ), and lysine 222. UTP is bound by residues 186 to 191 (KTKPTQ) and lysine 222. A Glutamine amidotransferase type-1 domain is found at 291–546 (RIAVVGKYTQ…IRAAMDNERL (256 aa)). Glycine 352 is a binding site for L-glutamine. The active-site Nucleophile; for glutamine hydrolysis is the cysteine 379. L-glutamine contacts are provided by residues 380 to 383 (LGMQ), glutamate 403, and arginine 474. Catalysis depends on residues histidine 519 and glutamate 521.

This sequence belongs to the CTP synthase family. As to quaternary structure, homotetramer.

The catalysed reaction is UTP + L-glutamine + ATP + H2O = CTP + L-glutamate + ADP + phosphate + 2 H(+). It carries out the reaction L-glutamine + H2O = L-glutamate + NH4(+). The enzyme catalyses UTP + NH4(+) + ATP = CTP + ADP + phosphate + 2 H(+). The protein operates within pyrimidine metabolism; CTP biosynthesis via de novo pathway; CTP from UDP: step 2/2. Its activity is regulated as follows. Allosterically activated by GTP, when glutamine is the substrate; GTP has no effect on the reaction when ammonia is the substrate. The allosteric effector GTP functions by stabilizing the protein conformation that binds the tetrahedral intermediate(s) formed during glutamine hydrolysis. Inhibited by the product CTP, via allosteric rather than competitive inhibition. Catalyzes the ATP-dependent amination of UTP to CTP with either L-glutamine or ammonia as the source of nitrogen. Regulates intracellular CTP levels through interactions with the four ribonucleotide triphosphates. The protein is CTP synthase of Paracoccus denitrificans (strain Pd 1222).